Consider the following 853-residue polypeptide: Transforming growth factor beta receptor type 3 (853 aa).

Residues 1 to 23 (MAVTSHHMIPVMVVLMSACLATA) form the signal peptide. Topologically, residues 24-789 (GPEPSTRCEL…IFHGLDTLTV (766 aa)) are extracellular. N-linked (GlcNAc...) asparagine glycosylation is found at N37, N144, and N493. Cysteines 55 and 200 form a disulfide. The 275-residue stretch at 456–730 (KCDHEKMVVA…PRCVTPDDAC (275 aa)) folds into the ZP domain. The interval 530 to 559 (SPGDSSGWPDGYEDLESGDNGFPGDGDEGE) is disordered. O-linked (Xyl...) (glycosaminoglycan) serine glycans are attached at residues S535 and S546. 3 N-linked (GlcNAc...) asparagine glycosylation sites follow: N572, N591, and N698. Disulfide bonds link C640–C706, C661–C730, and C711–C723. Residues 737-751 (MIWTMMQNKKTFTKP) form an interaction with TGF-beta ligand region. A helical membrane pass occupies residues 790–811 (MGIAFAAFVIGALLTGALWYIY). The Cytoplasmic segment spans residues 812–853 (SHTGETARRQQVPTSPPASENSSAAHSIGSTQSTPCSSSSTA). Positions 820–836 (RQQVPTSPPASENSSAA) are enriched in polar residues. The segment at 820-853 (RQQVPTSPPASENSSAAHSIGSTQSTPCSSSSTA) is disordered. Positions 838–853 (SIGSTQSTPCSSSSTA) are enriched in low complexity. Residue T842 is modified to Phosphothreonine.

As to quaternary structure, forms homodimers and homooligomers. Interacts with DYNLT4. Interacts with integrin ITGA5:ITGB1; this interaction promotes the internalization and trafficking of ITGA5:ITGB1 into endocytic vesicles. Interacts with TGFB1, BMP2, BMP5, BMP7 or GDF5 and inhibin A via the ligand binding domains. Interacts with ALK3/BMPR1A; this interaction results in the cell surface retention of BMPR1A. Interacts with ALK6/BMPR1B; this interaction enhances BMPR1B-mediated stimulation of the BMP signaling pathway. Interacts with the scaffolding protein beta-arrestin2/ARRB2; this interaction mediates internalization of TGFBR3 and thus regulates migration, actin cytoskeleton and activation of CDC42. Post-translationally, extensively modified by glycosaminoglycan groups (GAG). Phosphorylated in the cytoplasmic domain by the type II receptor TGFBR2 at THR-842 to mediate recruitment of ARRB2 and subsequent internalization of TGFBR2 and TGFBR3.

Its subcellular location is the cell membrane. The protein resides in the secreted. It is found in the extracellular space. The protein localises to the extracellular matrix. Cell surface receptor that regulates diverse cellular processes including cell proliferation, differentiation, migration, and apoptosis. Initiates BMP, inhibin, and TGF-beta signaling pathways by interacting with different ligands including TGFB1, BMP2, BMP5, BMP7 or GDF5. Alternatively, acts as a cell surface coreceptor for BMP ligands, serving to enhance ligand binding by differentially regulating BMPR1A/ALK3 and BMPR1B/ALK6 receptor trafficking. Promotes epithelial cell adhesion, focal adhesion formation and integrin signaling during epithelial cell spreading on fibronectin. By interacting with the scaffolding protein beta-arrestin2/ARRB2, regulates migration or actin cytoskeleton and promotes the activation of CDC42 as well as the inhibition of NF-kappa-B. In gonadotrope cells, acts as an inhibin A coreceptor and regulates follicle-stimulating hormone (FSH) levels and female fertility. Plays a role in the inhibition of directed and random cell migration in epithelial cells by altering the actin cytoskeletal organization. Participates in epithelial-mesenchymal transformation (EMT) upon binding to BMP2 or TGFB2, by activating the PAR6/SMURF1/RHOA pathway. The polypeptide is Transforming growth factor beta receptor type 3 (Tgfbr3) (Rattus norvegicus (Rat)).